A 207-amino-acid chain; its full sequence is Urease accessory protein UreG (207 aa).

Residue 16-23 participates in GTP binding; sequence GPVGSGKT.

It belongs to the SIMIBI class G3E GTPase family. UreG subfamily. Homodimer. UreD, UreF and UreG form a complex that acts as a GTP-hydrolysis-dependent molecular chaperone, activating the urease apoprotein by helping to assemble the nickel containing metallocenter of UreC. The UreE protein probably delivers the nickel.

It localises to the cytoplasm. In terms of biological role, facilitates the functional incorporation of the urease nickel metallocenter. This process requires GTP hydrolysis, probably effectuated by UreG. This chain is Urease accessory protein UreG, found in Blochmanniella pennsylvanica (strain BPEN).